An 83-amino-acid polypeptide reads, in one-letter code: Sec-independent protein translocase protein TatA (83 aa).

Residues 1 to 21 (MGSLSPWHWAILAVVVIVLFG) form a helical membrane-spanning segment. Residues 48–83 (NENKAEASIETPTPVQSQRVDPSAASGQDSTEARPA) are disordered. Positions 57–77 (ETPTPVQSQRVDPSAASGQDS) are enriched in polar residues.

This sequence belongs to the TatA/E family. The Tat system comprises two distinct complexes: a TatABC complex, containing multiple copies of TatA, TatB and TatC subunits, and a separate TatA complex, containing only TatA subunits. Substrates initially bind to the TatABC complex, which probably triggers association of the separate TatA complex to form the active translocon.

The protein localises to the cell membrane. In terms of biological role, part of the twin-arginine translocation (Tat) system that transports large folded proteins containing a characteristic twin-arginine motif in their signal peptide across membranes. TatA could form the protein-conducting channel of the Tat system. This chain is Sec-independent protein translocase protein TatA, found in Mycobacterium bovis (strain BCG / Pasteur 1173P2).